The chain runs to 291 residues: 4-diphosphocytidyl-2-C-methyl-D-erythritol kinase (291 aa).

Lysine 10 is a catalytic residue. 94–104 is an ATP binding site; sequence PVSAGLAGGSS. Residue aspartate 136 is part of the active site.

Belongs to the GHMP kinase family. IspE subfamily.

It carries out the reaction 4-CDP-2-C-methyl-D-erythritol + ATP = 4-CDP-2-C-methyl-D-erythritol 2-phosphate + ADP + H(+). It functions in the pathway isoprenoid biosynthesis; isopentenyl diphosphate biosynthesis via DXP pathway; isopentenyl diphosphate from 1-deoxy-D-xylulose 5-phosphate: step 3/6. In terms of biological role, catalyzes the phosphorylation of the position 2 hydroxy group of 4-diphosphocytidyl-2C-methyl-D-erythritol. In Listeria welshimeri serovar 6b (strain ATCC 35897 / DSM 20650 / CCUG 15529 / CIP 8149 / NCTC 11857 / SLCC 5334 / V8), this protein is 4-diphosphocytidyl-2-C-methyl-D-erythritol kinase.